We begin with the raw amino-acid sequence, 141 residues long: Hemoglobin subunit alpha (141 aa).

The Globin domain maps to Val-1–Arg-141. Ser-3 carries the phosphoserine modification. Lys-7 is subject to N6-succinyllysine. Thr-8 carries the phosphothreonine modification. Residue Lys-11 is modified to N6-succinyllysine. Lys-16 bears the N6-acetyllysine; alternate mark. Lys-16 bears the N6-succinyllysine; alternate mark. The residue at position 24 (Tyr-24) is a Phosphotyrosine. Ser-35 is modified (phosphoserine). Lys-40 carries the N6-succinyllysine modification. Ser-49 is subject to Phosphoserine. His-58 is an O2 binding site. His-87 contributes to the heme b binding site. Ser-102 carries the phosphoserine modification. The residue at position 108 (Thr-108) is a Phosphothreonine. At Ser-124 the chain carries Phosphoserine. Phosphothreonine is present on residues Thr-134 and Thr-137. Ser-138 bears the Phosphoserine mark.

It belongs to the globin family. Heterotetramer of two alpha chains and two beta chains. Red blood cells.

In terms of biological role, involved in oxygen transport from the lung to the various peripheral tissues. Its function is as follows. Hemopressin acts as an antagonist peptide of the cannabinoid receptor CNR1. Hemopressin-binding efficiently blocks cannabinoid receptor CNR1 and subsequent signaling. The sequence is that of Hemoglobin subunit alpha (HBA) from Elephas maximus (Indian elephant).